We begin with the raw amino-acid sequence, 393 residues long: S-adenosylmethionine synthase 3 (393 aa).

Glu43 contacts K(+). Glu56 and Gln99 together coordinate L-methionine. Residues 167–169 (DGK), 235–238 (SGRF), Asp246, 252–253 (RK), Ala269, Lys273, and Lys277 contribute to the ATP site. Residue Asp246 coordinates L-methionine. Lys277 serves as a coordination point for L-methionine.

It belongs to the AdoMet synthase family. As to quaternary structure, homotetramer. It depends on Mn(2+) as a cofactor. Mg(2+) serves as cofactor. The cofactor is Co(2+). K(+) is required as a cofactor.

The protein resides in the cytoplasm. It catalyses the reaction L-methionine + ATP + H2O = S-adenosyl-L-methionine + phosphate + diphosphate. It functions in the pathway amino-acid biosynthesis; S-adenosyl-L-methionine biosynthesis; S-adenosyl-L-methionine from L-methionine: step 1/1. Its function is as follows. Catalyzes the formation of S-adenosylmethionine from methionine and ATP. The reaction comprises two steps that are both catalyzed by the same enzyme: formation of S-adenosylmethionine (AdoMet) and triphosphate, and subsequent hydrolysis of the triphosphate. This chain is S-adenosylmethionine synthase 3 (SAM3), found in Actinidia chinensis var. chinensis (Chinese soft-hair kiwi).